The primary structure comprises 154 residues: Ribonuclease H (154 aa).

One can recognise an RNase H type-1 domain in the interval 1 to 142; it reads MRKQIEIFTD…CDELAKQGAE (142 aa). Positions 10, 48, 70, and 134 each coordinate Mg(2+).

It belongs to the RNase H family. In terms of assembly, monomer. Requires Mg(2+) as cofactor.

The protein localises to the cytoplasm. It carries out the reaction Endonucleolytic cleavage to 5'-phosphomonoester.. In terms of biological role, endonuclease that specifically degrades the RNA of RNA-DNA hybrids. In Actinobacillus succinogenes (strain ATCC 55618 / DSM 22257 / CCUG 43843 / 130Z), this protein is Ribonuclease H.